We begin with the raw amino-acid sequence, 60 residues long: Large ribosomal subunit protein bL32 (60 aa).

Positions 1–60 are disordered; sequence MAVQQVKKSRSKRDIRRSHDSLTNPTLSTDKSTGELHLRHHVSPNGFYKGRKVVDTKSED. Residues 7 to 16 are compositionally biased toward basic residues; the sequence is KKSRSKRDIR. Positions 22-31 are enriched in polar residues; the sequence is LTNPTLSTDK.

It belongs to the bacterial ribosomal protein bL32 family.

The chain is Large ribosomal subunit protein bL32 from Francisella tularensis subsp. tularensis (strain SCHU S4 / Schu 4).